A 636-amino-acid chain; its full sequence is Threonine--tRNA ligase (636 aa).

The region spanning 1 to 59 (MPIITLPDGTKKIFEQVVSVEQVAKSMGLVKAALAGEVDGELVSTSFLIKTDANLTIIT) is the TGS domain. A catalytic region spans residues 240 to 531 (DHRKIGKTQD…LIEHYEGAYP (292 aa)). 3 residues coordinate Zn(2+): Cys-331, His-382, and His-508.

Belongs to the class-II aminoacyl-tRNA synthetase family. Homodimer. Zn(2+) is required as a cofactor.

Its subcellular location is the cytoplasm. The catalysed reaction is tRNA(Thr) + L-threonine + ATP = L-threonyl-tRNA(Thr) + AMP + diphosphate + H(+). Catalyzes the attachment of threonine to tRNA(Thr) in a two-step reaction: L-threonine is first activated by ATP to form Thr-AMP and then transferred to the acceptor end of tRNA(Thr). Also edits incorrectly charged L-seryl-tRNA(Thr). The polypeptide is Threonine--tRNA ligase (Vesicomyosocius okutanii subsp. Calyptogena okutanii (strain HA)).